We begin with the raw amino-acid sequence, 590 residues long: Protein NRT1/ PTR FAMILY 6.4 (590 aa).

The disordered stretch occupies residues 1–24; it reads MVHVSSSHGAKDGSEEAYDYRGNP. 12 helical membrane passes run 48–68, 73–93, 104–124, 147–167, 197–217, 222–242, 332–352, 371–391, 419–439, 453–473, 492–512, and 533–553; these read ICVM…LHIS, ATIV…GGFL, VAIS…ATTI, GHQL…GGGI, FYFS…YVQD, GWGY…LLCG, VKLV…WTIY, GSFT…ILLF, IGVG…IENA, AFWL…AYVG, GLFL…VSLV, and FYWL…VFAM.

The protein belongs to the major facilitator superfamily. Proton-dependent oligopeptide transporter (POT/PTR) (TC 2.A.17) family. Expressed in leaves, flowers and siliques. Detected in leaves.

It localises to the membrane. Its function is as follows. Low-affinity nitrate transporter. This Arabidopsis thaliana (Mouse-ear cress) protein is Protein NRT1/ PTR FAMILY 6.4 (NPF6.4).